Here is a 793-residue protein sequence, read N- to C-terminus: Protein translocase subunit SecA 2 (793 aa).

ATP is bound by residues Gln-77, 95-99, and Asp-493; that span reads GEGKT.

This sequence belongs to the SecA family. In terms of assembly, monomer and homodimer. Part of the essential Sec protein translocation apparatus which comprises SecA, SecYEG and auxiliary proteins SecDF. Other proteins may also be involved.

The protein localises to the cell membrane. The protein resides in the cytoplasm. It catalyses the reaction ATP + H2O + cellular proteinSide 1 = ADP + phosphate + cellular proteinSide 2.. Functionally, part of the Sec protein translocase complex. Interacts with the SecYEG preprotein conducting channel. Has a central role in coupling the hydrolysis of ATP to the transfer of proteins into and across the cell membrane, serving as an ATP-driven molecular motor driving the stepwise translocation of polypeptide chains across the membrane. This Streptococcus sanguinis (strain SK36) protein is Protein translocase subunit SecA 2.